Consider the following 279-residue polypeptide: Protoheme IX farnesyltransferase (279 aa).

The next 9 helical transmembrane spans lie at 5–25 (LILLKPRVIWLLILASLAGYL), 33–53 (IAQAFSLLLVAFLSTGGAAAF), 84–103 (LAYSLVLSALGIALGFLLLG), 108–125 (LFVFLGWFFYAVVYTVIL), 133–153 (ILGGGFAGNATFLGGYALGAG), 159–179 (AVLISFAIYLWIPSHIWALAY), 201–221 (AAVAIISLLNLASAAYIMTLY), 222–242 (LAFGGGLLGGALVAAGVVATI), and 256–276 (AMWKMYKASSPVLTLFLLALI).

It belongs to the UbiA prenyltransferase family. Protoheme IX farnesyltransferase subfamily.

Its subcellular location is the cell membrane. It carries out the reaction heme b + (2E,6E)-farnesyl diphosphate + H2O = Fe(II)-heme o + diphosphate. It functions in the pathway porphyrin-containing compound metabolism; heme O biosynthesis; heme O from protoheme: step 1/1. Its function is as follows. Converts heme B (protoheme IX) to heme O by substitution of the vinyl group on carbon 2 of heme B porphyrin ring with a hydroxyethyl farnesyl side group. This is Protoheme IX farnesyltransferase from Pyrobaculum arsenaticum (strain DSM 13514 / JCM 11321 / PZ6).